A 291-amino-acid chain; its full sequence is tRNA U34 carboxymethyltransferase (291 aa).

Residues K61, W75, K80, G100, 122 to 124 (DPS), 149 to 150 (VE), Y169, and R284 each bind carboxy-S-adenosyl-L-methionine.

This sequence belongs to the class I-like SAM-binding methyltransferase superfamily. CmoB family. As to quaternary structure, homotetramer.

The enzyme catalyses carboxy-S-adenosyl-L-methionine + 5-hydroxyuridine(34) in tRNA = 5-carboxymethoxyuridine(34) in tRNA + S-adenosyl-L-homocysteine + H(+). Its function is as follows. Catalyzes carboxymethyl transfer from carboxy-S-adenosyl-L-methionine (Cx-SAM) to 5-hydroxyuridine (ho5U) to form 5-carboxymethoxyuridine (cmo5U) at position 34 in tRNAs. The sequence is that of tRNA U34 carboxymethyltransferase from Campylobacter jejuni (strain RM1221).